The sequence spans 151 residues: Cytochrome c-type biogenesis protein CcmE (151 aa).

The Cytoplasmic segment spans residues 1–8; the sequence is MNPQRKKR. Residues 9 to 29 traverse the membrane as a helical; Signal-anchor for type II membrane protein segment; the sequence is LFLILGLLAGVAVAVGFALSA. Topologically, residues 30 to 151 are periplasmic; it reads LQQNINLFYT…QAASGAEAKP (122 aa). Histidine 124 and tyrosine 128 together coordinate heme.

Belongs to the CcmE/CycJ family.

The protein resides in the cell inner membrane. Heme chaperone required for the biogenesis of c-type cytochromes. Transiently binds heme delivered by CcmC and transfers the heme to apo-cytochromes in a process facilitated by CcmF and CcmH. The protein is Cytochrome c-type biogenesis protein CcmE of Pseudomonas putida (strain W619).